Reading from the N-terminus, the 134-residue chain is Small ribosomal subunit protein uS9 (134 aa).

The segment at 109 to 134 is disordered; the sequence is KGDPRRKEPKKFGGRGARARRQKSYR. Residues 115-134 show a composition bias toward basic residues; that stretch reads KEPKKFGGRGARARRQKSYR.

Belongs to the universal ribosomal protein uS9 family.

The sequence is that of Small ribosomal subunit protein uS9 from Methanopyrus kandleri (strain AV19 / DSM 6324 / JCM 9639 / NBRC 100938).